A 292-amino-acid chain; its full sequence is UPF0725 protein At4g28920 (292 aa).

Over residues 1–17 (MSENDSSESDIEMDPEE) the composition is skewed to acidic residues. The tract at residues 1-24 (MSENDSSESDIEMDPEEEKVYRRQ) is disordered.

The protein belongs to the UPF0725 (EMB2204) family.

This Arabidopsis thaliana (Mouse-ear cress) protein is UPF0725 protein At4g28920.